Consider the following 244-residue polypeptide: DNA repair protein RecO (244 aa).

This sequence belongs to the RecO family.

Involved in DNA repair and RecF pathway recombination. The sequence is that of DNA repair protein RecO from Myxococcus xanthus (strain DK1622).